We begin with the raw amino-acid sequence, 393 residues long: NAD(P)H-quinone oxidoreductase subunit H, chloroplastic (393 aa).

The protein belongs to the complex I 49 kDa subunit family. NDH is composed of at least 16 different subunits, 5 of which are encoded in the nucleus.

Its subcellular location is the plastid. The protein localises to the chloroplast thylakoid membrane. The enzyme catalyses a plastoquinone + NADH + (n+1) H(+)(in) = a plastoquinol + NAD(+) + n H(+)(out). It catalyses the reaction a plastoquinone + NADPH + (n+1) H(+)(in) = a plastoquinol + NADP(+) + n H(+)(out). Its function is as follows. NDH shuttles electrons from NAD(P)H:plastoquinone, via FMN and iron-sulfur (Fe-S) centers, to quinones in the photosynthetic chain and possibly in a chloroplast respiratory chain. The immediate electron acceptor for the enzyme in this species is believed to be plastoquinone. Couples the redox reaction to proton translocation, and thus conserves the redox energy in a proton gradient. The chain is NAD(P)H-quinone oxidoreductase subunit H, chloroplastic from Helianthus annuus (Common sunflower).